The following is a 702-amino-acid chain: Polyribonucleotide nucleotidyltransferase 1 (702 aa).

Asp483 and Asp489 together coordinate Mg(2+). The 60-residue stretch at 550–609 folds into the KH domain; it reads PQVTKLKVHPDKVREVIGAGGKVINKIIDETGVKINIENDGTIYIAAPDQESARVALEMI. An S1 motif domain is found at 619-687; the sequence is GEVYTGKVIK…PQGKIGLSRK (69 aa).

This sequence belongs to the polyribonucleotide nucleotidyltransferase family. The cofactor is Mg(2+).

It localises to the cytoplasm. It catalyses the reaction RNA(n+1) + phosphate = RNA(n) + a ribonucleoside 5'-diphosphate. In terms of biological role, involved in mRNA degradation. Catalyzes the phosphorolysis of single-stranded polyribonucleotides processively in the 3'- to 5'-direction. The sequence is that of Polyribonucleotide nucleotidyltransferase 1 from Alkaliphilus metalliredigens (strain QYMF).